Here is a 394-residue protein sequence, read N- to C-terminus: NAC domain-containing protein 3 (394 aa).

Positions 3 to 147 constitute an NAC domain; it reads TPVGLRFCPT…TYTLCKVMFN (145 aa). A DNA-binding region spans residues 104–153; the sequence is IGEKKILMFYTSKESKSDWVIHEYHGFSHNQMMMTYTLCKVMFNGGMREK. 2 disordered regions span residues 152–173 and 264–300; these read EKSS…RRDS and NSLT…CDSF. Over residues 155–165 the composition is skewed to low complexity; the sequence is SSSPSSSGVSG. Polar residues predominate over residues 286 to 300; it reads PKTNSIQTSSTCDSF.

The protein localises to the nucleus. The chain is NAC domain-containing protein 3 (NAC003) from Arabidopsis thaliana (Mouse-ear cress).